The following is a 475-amino-acid chain: GlcNAc-binding protein A (475 aa).

The signal sequence occupies residues Met1 to Ala27. A Chitin-binding type-4 domain is found at His28–Phe195. Residues Ala426–Trp468 enclose the Chitin-binding type-3 domain.

The protein belongs to the GbpA family.

It localises to the secreted. Its function is as follows. Probably interacts with GlcNAc residues. May promote attachment to both epithelial cell surfaces and chitin. This is GlcNAc-binding protein A from Shewanella oneidensis (strain ATCC 700550 / JCM 31522 / CIP 106686 / LMG 19005 / NCIMB 14063 / MR-1).